A 381-amino-acid polypeptide reads, in one-letter code: Beta-lactamase CMY-4 (381 aa).

A signal peptide spans 1–20; it reads MMKKSLCCALLLTASFSTFA. Ser-84 acts as the Acyl-ester intermediate in catalysis. A beta-lactam is bound by residues Ser-84, Gln-140, Tyr-170, and Asn-172.

This sequence belongs to the class-C beta-lactamase family.

It carries out the reaction a beta-lactam + H2O = a substituted beta-amino acid. In terms of biological role, class C beta-lactamase which confers resistance to penicillins and cephalosporins. The protein is Beta-lactamase CMY-4 of Klebsiella pneumoniae.